Here is a 74-residue protein sequence, read N- to C-terminus: Conotoxin Vc6.8 (74 aa).

An N-terminal signal peptide occupies residues 1 to 19 (MEKLTILLLVAAVLMSTQA). Positions 20 to 34 (LMQEQRQKAKINLFS) are excised as a propeptide. Cystine bridges form between cysteine 49/cysteine 62, cysteine 55/cysteine 66, and cysteine 61/cysteine 70.

The protein belongs to the conotoxin O2 superfamily. As to expression, expressed by the venom duct.

The protein resides in the secreted. Inhibits voltage-gated ion channels. The chain is Conotoxin Vc6.8 from Conus victoriae (Queen Victoria cone).